A 1163-amino-acid polypeptide reads, in one-letter code: Guanylate cyclase 32E (1163 aa).

An N-terminal signal peptide occupies residues 1 to 25 (MPGPCASAAAFSCILVLLLLGCQRS). Residues 29 to 469 (AAGATVSSMR…LCPRKKLDWR (441 aa)) are Extracellular-facing. N-linked (GlcNAc...) asparagine glycosylation is found at N147, N206, N368, and N390. Residues 470–490 (YLVSGPLCALVVVVAIALLIK) form a helical membrane-spanning segment. Residues 491–1163 (HYRYEQTLAG…RSAPSITFRL (673 aa)) lie on the Cytoplasmic side of the membrane. Residues 507–800 (MKDVTVINLG…IRLVRMHLKE (294 aa)) form the Protein kinase domain. A Guanylate cyclase domain is found at 873 to 1003 (TILFSDIVGF…DTVNTASRME (131 aa)).

It belongs to the adenylyl cyclase class-4/guanylyl cyclase family.

The protein resides in the membrane. The catalysed reaction is GTP = 3',5'-cyclic GMP + diphosphate. The protein is Guanylate cyclase 32E (Gyc32E) of Drosophila melanogaster (Fruit fly).